The chain runs to 269 residues: MSTLNIAVAGSSGRMGRALLEAVERAPDMRLSAALERSGSPYLGKDAGELIGSPCGIGITDNVDTALDGSQVLVDFTRPDGTLVHVDRCREKNIKMVIGTTGFSPRQKEALWIASRDIAIVLAPNMSVGVNVTLKLLETAARVLNEDYDIEIIEAHHRHKVDAPSGTALLMGEVVAKALGKELSEVAVYSREGHTGEREAGSIGFATVRGGDIVGDHTVMFAGTGERIEISHKASSRATFAEGALRAARFLADKRNGMFDMQDVLGLRQ.

NAD(+)-binding positions include 10-15 (GSSGRM) and Glu-36. Arg-37 is an NADP(+) binding site. Residues 99-101 (GTT) and 123-126 (APNM) each bind NAD(+). His-156 (proton donor/acceptor) is an active-site residue. His-157 serves as a coordination point for (S)-2,3,4,5-tetrahydrodipicolinate. The Proton donor role is filled by Lys-160. 166–167 (GT) serves as a coordination point for (S)-2,3,4,5-tetrahydrodipicolinate.

This sequence belongs to the DapB family.

Its subcellular location is the cytoplasm. The enzyme catalyses (S)-2,3,4,5-tetrahydrodipicolinate + NAD(+) + H2O = (2S,4S)-4-hydroxy-2,3,4,5-tetrahydrodipicolinate + NADH + H(+). It catalyses the reaction (S)-2,3,4,5-tetrahydrodipicolinate + NADP(+) + H2O = (2S,4S)-4-hydroxy-2,3,4,5-tetrahydrodipicolinate + NADPH + H(+). It participates in amino-acid biosynthesis; L-lysine biosynthesis via DAP pathway; (S)-tetrahydrodipicolinate from L-aspartate: step 4/4. In terms of biological role, catalyzes the conversion of 4-hydroxy-tetrahydrodipicolinate (HTPA) to tetrahydrodipicolinate. The protein is 4-hydroxy-tetrahydrodipicolinate reductase of Nitrosospira multiformis (strain ATCC 25196 / NCIMB 11849 / C 71).